A 263-amino-acid polypeptide reads, in one-letter code: 4-hydroxy-tetrahydrodipicolinate reductase (263 aa).

10-15 (GASGKM) lines the NAD(+) pocket. Position 38 (arginine 38) interacts with NADP(+). NAD(+) is bound by residues 97–99 (GTT) and 123–126 (APNF). Residue histidine 153 is the Proton donor/acceptor of the active site. Histidine 154 contacts (S)-2,3,4,5-tetrahydrodipicolinate. The active-site Proton donor is lysine 157. Position 163–164 (163–164 (GT)) interacts with (S)-2,3,4,5-tetrahydrodipicolinate.

The protein belongs to the DapB family.

The protein localises to the cytoplasm. It carries out the reaction (S)-2,3,4,5-tetrahydrodipicolinate + NAD(+) + H2O = (2S,4S)-4-hydroxy-2,3,4,5-tetrahydrodipicolinate + NADH + H(+). It catalyses the reaction (S)-2,3,4,5-tetrahydrodipicolinate + NADP(+) + H2O = (2S,4S)-4-hydroxy-2,3,4,5-tetrahydrodipicolinate + NADPH + H(+). It participates in amino-acid biosynthesis; L-lysine biosynthesis via DAP pathway; (S)-tetrahydrodipicolinate from L-aspartate: step 4/4. In terms of biological role, catalyzes the conversion of 4-hydroxy-tetrahydrodipicolinate (HTPA) to tetrahydrodipicolinate. In Dehalococcoides mccartyi (strain ATCC BAA-2266 / KCTC 15142 / 195) (Dehalococcoides ethenogenes (strain 195)), this protein is 4-hydroxy-tetrahydrodipicolinate reductase.